Reading from the N-terminus, the 242-residue chain is Platinum sensitivity protein 3 (242 aa).

As to quaternary structure, component of the SHU complex composed of at least CSM2, PSY3, SHU1 and SHU2.

It is found in the nucleus. Functionally, required for resistance to the DNA-damaging agents methyl methanesulfonate (MMS), cisplatin and oxaliplatin, but not to mitomycin C. Plays a role in protection against mutation accumulation. May be a component of the recombination-repair pathway. The sequence is that of Platinum sensitivity protein 3 (PSY3) from Saccharomyces cerevisiae (strain ATCC 204508 / S288c) (Baker's yeast).